The chain runs to 91 residues: Cell division topological specificity factor (91 aa).

Belongs to the MinE family.

In terms of biological role, prevents the cell division inhibition by proteins MinC and MinD at internal division sites while permitting inhibition at polar sites. This ensures cell division at the proper site by restricting the formation of a division septum at the midpoint of the long axis of the cell. The polypeptide is Cell division topological specificity factor (Desulfitobacterium hafniense (strain DSM 10664 / DCB-2)).